Reading from the N-terminus, the 208-residue chain is MTDMLTGTRRARVERKTKESDIVVDLDLDGTGIVDIRTGVPFFDHMLTSLGSHASFDLTVHATGDIEIEGHHTVEDTAIVLGQALGQALGDKKGIRRFGDAFIPMDETLAHAAVDVSGRPYFVHTGEPDYMVEFTIAGSSAPYHTVINRHVFESLAFNARIALHVRTIYGRDPHHITEAQYKAVARALRQAVELDPRVTGVPSTKGSL.

Belongs to the imidazoleglycerol-phosphate dehydratase family.

The protein resides in the cytoplasm. It catalyses the reaction D-erythro-1-(imidazol-4-yl)glycerol 3-phosphate = 3-(imidazol-4-yl)-2-oxopropyl phosphate + H2O. It functions in the pathway amino-acid biosynthesis; L-histidine biosynthesis; L-histidine from 5-phospho-alpha-D-ribose 1-diphosphate: step 6/9. This is Imidazoleglycerol-phosphate dehydratase from Mycobacterium sp. (strain JLS).